The following is a 78-amino-acid chain: Translation initiation factor IF-1, chloroplastic (78 aa).

In terms of domain architecture, S1-like spans 1-72; the sequence is MKKQKLIDME…TKGRITYRFH (72 aa).

Belongs to the IF-1 family. As to quaternary structure, component of the 30S ribosomal translation pre-initiation complex which assembles on the 30S ribosome in the order IF-2 and IF-3, IF-1 and N-formylmethionyl-tRNA(fMet); mRNA recruitment can occur at any time during PIC assembly.

The protein resides in the plastid. It is found in the chloroplast. In terms of biological role, one of the essential components for the initiation of protein synthesis. Stabilizes the binding of IF-2 and IF-3 on the 30S subunit to which N-formylmethionyl-tRNA(fMet) subsequently binds. Helps modulate mRNA selection, yielding the 30S pre-initiation complex (PIC). Upon addition of the 50S ribosomal subunit IF-1, IF-2 and IF-3 are released leaving the mature 70S translation initiation complex. The sequence is that of Translation initiation factor IF-1, chloroplastic from Huperzia lucidula (Shining clubmoss).